A 2409-amino-acid polypeptide reads, in one-letter code: Reducing polyketide synthase FUB1 (2409 aa).

The span at 1-43 shows a compositional bias: low complexity; it reads MTLSNGSNGANGTSNGHGAHPSANGFHNAANGGANNGTPNGGA. Residues 1-49 form a disordered region; that stretch reads MTLSNGSNGANGTSNGHGAHPSANGFHNAANGGANNGTPNGGAEYNASL. The 423-residue stretch at 57 to 479 folds into the Ketosynthase family 3 (KS3) domain; it reads SSAIAVIGVS…GANAHAVLDD (423 aa). Catalysis depends on for beta-ketoacyl synthase activity residues Cys230, His365, and His403. Residues 608-929 form a malonyl-CoA:ACP transacylase (MAT) domain region; it reads TFIFTGQGAQ…FSAIKRKQDA (322 aa). Ser699 functions as the For malonyltransferase activity in the catalytic mechanism. Positions 994 to 1127 are N-terminal hotdog fold; sequence LELLGVRDPR…GLVSTSYKRE (134 aa). Residues 994–1307 form the PKS/mFAS DH domain; the sequence is LELLGVRDPR…TVPLRGASDP (314 aa). The segment at 995 to 1302 is dehydratase (DH) domain; the sequence is ELLGVRDPRS…LEGCKTVPLR (308 aa). The Proton acceptor; for dehydratase activity role is filled by His1026. The C-terminal hotdog fold stretch occupies residues 1155-1307; the sequence is LPSVDPTVFY…TVPLRGASDP (153 aa). Asp1220 functions as the Proton donor; for dehydratase activity in the catalytic mechanism. Positions 1713–2025 are enoyl reductase (ER) domain; sequence GLLDTLEYLS…SGGHVGKIVL (313 aa). A ketoreductase (KR) domain region spans residues 2049–2225; it reads ATYVLIGGLG…AATSINLSLV (177 aa). Residues 2328-2405 enclose the Carrier domain; it reads EVYEIVLQQL…GFAKKVMAKS (78 aa). The residue at position 2365 (Ser2365) is an O-(pantetheine 4'-phosphoryl)serine.

Its pathway is mycotoxin biosynthesis. Its function is as follows. Reducing polyketide synthase; part of the gene cluster that mediates the biosynthesis of fusaric acid, a mycotoxin with low to moderate toxicity to animals and humans, but with high phytotoxic properties. L-aspartate is suggested as fusaric acid amino acid precursor that is activated and further processed to O-acetyl-L-homoserine by cluster enzymes aspartate kinase FUB3 and homoserine O-acetyltransferase FUB5, as well as enzymes of the primary metabolism. The polyketide synthase (PKS) FUB1 generates the triketide trans-2-hexenal which is presumptively released by the hydrolase FUB4 and linked to the NRPS-bound amino acid precursor by NAD(P)-dependent dehydrogenase FUB6. FUB1, FUB4, and the non-canonical NRPS Fub8 may form an enzyme complex. Further processing of the NRPS-bound intermediate might be carried out by FUB6 and the sulfhydrylase FUB7, enabling a spontaneous electrocyclization to close the carbon backbone of fusaric acid. Dihydrofusaric acid is likely to be released via reduction by the thioester reductase (TR) domain of FUB8 whereupon the final oxidation to fusaric acid may (also) be performed by the FMN-dependent dehydrogenase FUB9. This Gibberella moniliformis (strain M3125 / FGSC 7600) (Maize ear and stalk rot fungus) protein is Reducing polyketide synthase FUB1.